Consider the following 192-residue polypeptide: Imidazoleglycerol-phosphate dehydratase (192 aa).

It belongs to the imidazoleglycerol-phosphate dehydratase family.

It localises to the cytoplasm. The enzyme catalyses D-erythro-1-(imidazol-4-yl)glycerol 3-phosphate = 3-(imidazol-4-yl)-2-oxopropyl phosphate + H2O. It functions in the pathway amino-acid biosynthesis; L-histidine biosynthesis; L-histidine from 5-phospho-alpha-D-ribose 1-diphosphate: step 6/9. This Vesicomyosocius okutanii subsp. Calyptogena okutanii (strain HA) protein is Imidazoleglycerol-phosphate dehydratase.